The sequence spans 174 residues: Secretory-abundant heat soluble protein 68234 (174 aa).

A signal peptide spans 1 to 19; that stretch reads MARFLVALALFGVVAMTAA. Residues 26-57 are SAHS-c1; the sequence is EWSGKPWLGKFVAEVTDKSENWEAFVDALGLP. Residues 72-100 are SAHS-c2; the sequence is YKQGDHYHHIFALPDKNFEKDIEFTLGQE. Residues 113 to 162 form an SAHS-c3 region; sequence KYSEDGEKLVADVSIPTKGKTIRSEYEVQGDQLIKTYKTGDIVAKKWFKK.

The protein belongs to the Secretory-abundant heat soluble protein (SAHS) family.

Its subcellular location is the secreted. Secreted heat soluble protein acting as a molecular shield in water-deficient condition. Tardigrade-specific intrinsically disordered proteins (TDPs) are essential for desiccation tolerance by forming non-crystalline amorphous solids upon desiccation, and this vitrified state mirrors their protective capabilities. This chain is Secretory-abundant heat soluble protein 68234, found in Hypsibius exemplaris (Freshwater tardigrade).